Reading from the N-terminus, the 134-residue chain is MDSRTGEPITARQAMNGEYIWRVPNPLYFKIIKHHKRPFNYNHDIIQVRIQFNHNLRRALAIHKCFLDFTVFTRLQPATWRFLRVFKTQVMKYLDSLGVISINNVIRSVDHVLYNVLDSTFDVIEDHDIKFNFY.

This sequence belongs to the geminiviridae replication enhancer protein family. As to quaternary structure, homooligomer. Interacts with the replication-associated protein (REP). Interacts with host proliferating cell nuclear antigen (PCNA). Interacts with host retinoblastoma-related protein 1 (RBR1), and may thereby deregulate the host cell cycle. Oligomerization and interaction with PCNA are necessary for optimal replication enhancement.

In terms of biological role, increases viral DNA accumulation. Enhances infectivity and symptom expression. The protein is Replication enhancer protein of Tomato leaf curl virus (strain Australia) (ToLCV).